The sequence spans 213 residues: Superoxide dismutase [Mn] (213 aa).

The Mn(2+) site is built by histidine 27, histidine 82, aspartate 168, and histidine 172.

This sequence belongs to the iron/manganese superoxide dismutase family. Homodimer.

It catalyses the reaction 2 superoxide + 2 H(+) = H2O2 + O2. Inhibited by hydrogen peroxide. In terms of biological role, destroys superoxide anion radicals which are normally produced within the cells and which are toxic to biological systems. In Haemophilus ducreyi (strain 35000HP / ATCC 700724), this protein is Superoxide dismutase [Mn] (sodA).